A 378-amino-acid polypeptide reads, in one-letter code: UPF0754 membrane protein BT9727_0767 (378 aa).

Helical transmembrane passes span 1–21 (MNIWLSMLTTTGLGAIIGGFT) and 357–377 (YLGALLGGMIGIVQGLLLLFL).

The protein belongs to the UPF0754 family.

The protein resides in the cell membrane. The sequence is that of UPF0754 membrane protein BT9727_0767 from Bacillus thuringiensis subsp. konkukian (strain 97-27).